The chain runs to 333 residues: Porphobilinogen deaminase (333 aa).

C255 bears the S-(dipyrrolylmethanemethyl)cysteine mark.

Belongs to the HMBS family. In terms of assembly, monomer. The cofactor is dipyrromethane.

The catalysed reaction is 4 porphobilinogen + H2O = hydroxymethylbilane + 4 NH4(+). It functions in the pathway porphyrin-containing compound metabolism; protoporphyrin-IX biosynthesis; coproporphyrinogen-III from 5-aminolevulinate: step 2/4. Tetrapolymerization of the monopyrrole PBG into the hydroxymethylbilane pre-uroporphyrinogen in several discrete steps. In Burkholderia vietnamiensis (strain G4 / LMG 22486) (Burkholderia cepacia (strain R1808)), this protein is Porphobilinogen deaminase.